Reading from the N-terminus, the 271-residue chain is ABC transporter I family member 10 (271 aa).

Residues Val40–Asp267 enclose the ABC transporter domain. Gly77–Ser84 lines the ATP pocket.

The protein belongs to the ABC transporter superfamily. ABCI family.

This chain is ABC transporter I family member 10 (ABCI10), found in Arabidopsis thaliana (Mouse-ear cress).